The chain runs to 425 residues: MLELRFIRENLDLVQERCNRRGMSDELITSFTEIDQKRLSTLAEVESLKNKRNVASKEIAELKRGTDEQKLEAEPLILEMRQIGDKIKILDTSLNQIQEDLDKVVMAIPNLCQDDVPVGNSDEENIELRVWGKKPEFTFTPKAHYELGEEADTIDFERAAKISGARFAILKGFASRLDRALTNFMLDLHTQKHGYTEVLPPFLVNSASLTATGQLPKFKEDLFAIKDWDLYLIPTAEVPVTNIHRDETIAEQDLPIKYTAFTPCFRSEAGSHGRDTRGLVRQHQFNKVELVKFTTPERSTDELESLLGDAEEVLQLLGLHYRVVKLCTGDLGFSSSKTYDIEVWLPGQQKYREISSCSNFLDFQARRGGIRYRPEGQKKSKLVHTLNGSGLAVGRTLLAVMENYQQEDGSITIPEVLKPYFENRF.

235–237 (TAE) is an L-serine binding site. Residue 266–268 (RSE) participates in ATP binding. Glu-289 serves as a coordination point for L-serine. 353-356 (EISS) serves as a coordination point for ATP. An L-serine-binding site is contributed by Ser-389.

It belongs to the class-II aminoacyl-tRNA synthetase family. Type-1 seryl-tRNA synthetase subfamily. As to quaternary structure, homodimer. The tRNA molecule binds across the dimer.

It is found in the cytoplasm. It carries out the reaction tRNA(Ser) + L-serine + ATP = L-seryl-tRNA(Ser) + AMP + diphosphate + H(+). It catalyses the reaction tRNA(Sec) + L-serine + ATP = L-seryl-tRNA(Sec) + AMP + diphosphate + H(+). Its pathway is aminoacyl-tRNA biosynthesis; selenocysteinyl-tRNA(Sec) biosynthesis; L-seryl-tRNA(Sec) from L-serine and tRNA(Sec): step 1/1. In terms of biological role, catalyzes the attachment of serine to tRNA(Ser). Is also able to aminoacylate tRNA(Sec) with serine, to form the misacylated tRNA L-seryl-tRNA(Sec), which will be further converted into selenocysteinyl-tRNA(Sec). This chain is Serine--tRNA ligase, found in Desulfotalea psychrophila (strain LSv54 / DSM 12343).